The following is a 511-amino-acid chain: Cytochrome P450 monooxygenase roqR (511 aa).

The first 23 residues, Met-1 to Ala-23, serve as a signal peptide directing secretion. N-linked (GlcNAc...) asparagine glycans are attached at residues Asn-364, Asn-373, and Asn-383. Cys-455 is a heme binding site.

Belongs to the cytochrome P450 family. Heme serves as cofactor.

It participates in alkaloid biosynthesis. Cytochrome P450 monooxygenase; part of the gene cluster that mediates the biosynthesis of the mycotoxins roquefortine C and meleagrin. The first stage is catalyzed by the dipeptide synthase roqA which condenses histidine and tryptophan to produce histidyltryptophanyldiketopiperazine (HTD). HTD is then converted to roquefortine C through two possible pathways. In the first pathway, prenyltransferase roqD transforms HTD to the intermediate roquefortine D, which is in turn converted to roquefortine C by the cytochrome P450 monooxygenase roqR. In the second pathway, HTD is first converted to the intermediate dehydrohistidyltryptophanyldi-ketopiperazine (DHTD) by roqR which is then prenylated by roqD to form roquefortine C. Roquefortine C can be further transformed to meleagrin via three more reactions including oxydation to glandicolin A by roqM, which is further reduced to glandicoline B by roqO. Finally, glandicoline B is converted to meleagrin by the glandicoline B O-methyltransferase roqN. More studies identified further branching and additional metabolites produced by the roquefortine/meleagrin cluster, including roquefortine F, roquefortine L, roquefortine M, roquefortine N and neoxaline. This chain is Cytochrome P450 monooxygenase roqR, found in Penicillium rubens (strain ATCC 28089 / DSM 1075 / NRRL 1951 / Wisconsin 54-1255) (Penicillium chrysogenum).